We begin with the raw amino-acid sequence, 159 residues long: Phosphopantetheine adenylyltransferase (159 aa).

Residue Thr10 coordinates substrate. Residues 10-11 (TF) and His18 each bind ATP. Lys42, Met74, and Arg88 together coordinate substrate. Residues 89–91 (GLR), Glu99, and 124–130 (WSFISSS) each bind ATP.

This sequence belongs to the bacterial CoaD family. Homohexamer. Mg(2+) serves as cofactor.

The protein localises to the cytoplasm. The enzyme catalyses (R)-4'-phosphopantetheine + ATP + H(+) = 3'-dephospho-CoA + diphosphate. The protein operates within cofactor biosynthesis; coenzyme A biosynthesis; CoA from (R)-pantothenate: step 4/5. Its function is as follows. Reversibly transfers an adenylyl group from ATP to 4'-phosphopantetheine, yielding dephospho-CoA (dPCoA) and pyrophosphate. In Klebsiella pneumoniae (strain 342), this protein is Phosphopantetheine adenylyltransferase.